The following is a 139-amino-acid chain: Putative pre-16S rRNA nuclease (139 aa).

This sequence belongs to the YqgF nuclease family.

The protein resides in the cytoplasm. Its function is as follows. Could be a nuclease involved in processing of the 5'-end of pre-16S rRNA. This chain is Putative pre-16S rRNA nuclease, found in Streptococcus mutans serotype c (strain ATCC 700610 / UA159).